A 212-amino-acid polypeptide reads, in one-letter code: Cytidylate kinase (212 aa).

11–19 (GPAASGKGT) lines the ATP pocket. The tract at residues 50-69 (GGDPADPAASEEQARSLSRL) is disordered.

This sequence belongs to the cytidylate kinase family. Type 1 subfamily.

Its subcellular location is the cytoplasm. It carries out the reaction CMP + ATP = CDP + ADP. The catalysed reaction is dCMP + ATP = dCDP + ADP. The chain is Cytidylate kinase from Acidiphilium cryptum (strain JF-5).